We begin with the raw amino-acid sequence, 853 residues long: DNA mismatch repair protein MutS (853 aa).

614–621 contacts ATP; it reads GPNMGGKS.

It belongs to the DNA mismatch repair MutS family.

Functionally, this protein is involved in the repair of mismatches in DNA. It is possible that it carries out the mismatch recognition step. This protein has a weak ATPase activity. This Escherichia coli O127:H6 (strain E2348/69 / EPEC) protein is DNA mismatch repair protein MutS.